A 990-amino-acid chain; its full sequence is A-type ATP synthase subunit B (990 aa).

The DOD-type homing endonuclease domain occupies 491-614 (VAGLIASDGS…LQLLLKRLGV (124 aa)).

It belongs to the ATPase alpha/beta chains family. As to quaternary structure, has multiple subunits with at least A(3), B(3), C, D, E, F, H, I and proteolipid K(x). This protein undergoes a protein self splicing that involves a post-translational excision of the VDE intervening region (intein) followed by peptide ligation.

The protein localises to the cell membrane. In terms of biological role, component of the A-type ATP synthase that produces ATP from ADP in the presence of a proton gradient across the membrane. The B chain is a regulatory subunit. The chain is A-type ATP synthase subunit B from Methanopyrus kandleri (strain AV19 / DSM 6324 / JCM 9639 / NBRC 100938).